Reading from the N-terminus, the 702-residue chain is Cadmium, zinc and cobalt-transporting ATPase (702 aa).

The Cytoplasmic segment spans residues 1–86 (MRLVKQEYVL…HIKKSADDGY (86 aa)). The region spanning 4–72 (VKQEYVLDGL…KVKSIDPHVT (69 aa)) is the HMA domain. The Cd(2+) site is built by Cys-15 and Cys-18. Positions 15 and 18 each coordinate Co(2+). Residues Cys-15 and Cys-18 each contribute to the Zn(2+) site. A helical transmembrane segment spans residues 87–107 (RNRMVNMLIRMAAAVILGAAA). Topologically, residues 108–116 (YLVQSGTIE) are extracellular. A helical transmembrane segment spans residues 117 to 136 (FFLFLGAYLIIGGDIIIRAV). At 137–143 (KNIIRGQ) the chain is on the cytoplasmic side. The helical transmembrane segment at 144-163 (VFDEHFLMALATIGAFLIQQ) threads the bilayer. Residues 164–166 (YPE) are Extracellular-facing. Residues 167–186 (GVAVMLFYQIGELFQGAAVS) form a helical membrane-spanning segment. Residues 187–320 (RSRKSISALM…ITKFAKYYTP (134 aa)) lie on the Cytoplasmic side of the membrane. The helical transmembrane segment at 321-339 (AVVIIAVLLAFVPPLVLSG) threads the bilayer. Residues 340 to 345 (AALSDW) are Extracellular-facing. A helical transmembrane segment spans residues 346-363 (VYRALIFLVISCPCALVV). At 364 to 648 (SIPLGFFGGI…AIRIAKRTRR (285 aa)) the chain is on the cytoplasmic side. Catalysis depends on Asp-401, which acts as the 4-aspartylphosphate intermediate. Mg(2+) contacts are provided by Asp-595 and Asp-599. Residues 649–670 (IVWQNIGFALGVKAIFLILGAF) form a helical membrane-spanning segment. Over 671–678 (GIATMWEA) the chain is Extracellular. A helical transmembrane segment spans residues 679 to 694 (VFSDVGVTLLAVANAM). Topologically, residues 695 to 702 (RVMRLKNK) are cytoplasmic.

The protein belongs to the cation transport ATPase (P-type) (TC 3.A.3) family. Type IB subfamily.

The protein resides in the cell membrane. The catalysed reaction is Zn(2+)(in) + ATP + H2O = Zn(2+)(out) + ADP + phosphate + H(+). The enzyme catalyses Cd(2+)(in) + ATP + H2O = Cd(2+)(out) + ADP + phosphate + H(+). In terms of biological role, couples the hydrolysis of ATP with the transport of cadmium, zinc and cobalt out of the cell. Does not seem to transport copper. This is Cadmium, zinc and cobalt-transporting ATPase (cadA) from Bacillus subtilis (strain 168).